Consider the following 159-residue polypeptide: Ribosomal RNA large subunit methyltransferase H (159 aa).

Residues Leu-76, Gly-108, and 127 to 132 (FGRLTL) each bind S-adenosyl-L-methionine.

Belongs to the RNA methyltransferase RlmH family. As to quaternary structure, homodimer.

The protein resides in the cytoplasm. The enzyme catalyses pseudouridine(1915) in 23S rRNA + S-adenosyl-L-methionine = N(3)-methylpseudouridine(1915) in 23S rRNA + S-adenosyl-L-homocysteine + H(+). In terms of biological role, specifically methylates the pseudouridine at position 1915 (m3Psi1915) in 23S rRNA. The protein is Ribosomal RNA large subunit methyltransferase H of Listeria monocytogenes serotype 4a (strain HCC23).